A 540-amino-acid chain; its full sequence is Chaperonin GroEL (540 aa).

Residues 29–32 (TLGP), 86–90 (DGTTT), Gly413, 477–479 (DAL), and Asp493 each bind ATP.

The protein belongs to the chaperonin (HSP60) family. In terms of assembly, forms a cylinder of 14 subunits composed of two heptameric rings stacked back-to-back. Interacts with the co-chaperonin GroES.

The protein localises to the cytoplasm. It catalyses the reaction ATP + H2O + a folded polypeptide = ADP + phosphate + an unfolded polypeptide.. In terms of biological role, together with its co-chaperonin GroES, plays an essential role in assisting protein folding. The GroEL-GroES system forms a nano-cage that allows encapsulation of the non-native substrate proteins and provides a physical environment optimized to promote and accelerate protein folding. This Clostridium botulinum (strain Eklund 17B / Type B) protein is Chaperonin GroEL.